A 451-amino-acid polypeptide reads, in one-letter code: Putative gluconeogenesis factor (451 aa).

This sequence belongs to the gluconeogenesis factor family.

It localises to the cytoplasm. Required for morphogenesis under gluconeogenic growth conditions. In Clostridium acetobutylicum (strain ATCC 824 / DSM 792 / JCM 1419 / IAM 19013 / LMG 5710 / NBRC 13948 / NRRL B-527 / VKM B-1787 / 2291 / W), this protein is Putative gluconeogenesis factor.